Here is a 95-residue protein sequence, read N- to C-terminus: MHGNVATIEDIVLDLKPEPFDLYCREQLEDSDAEDETAVTQPDKQAFKVLSQCGGVCCKTVRLCVYSTHTGIRVLQELLHQDALQIVCPTCASRL.

The segment at 1–41 (MHGNVATIEDIVLDLKPEPFDLYCREQLEDSDAEDETAVTQ) is E7 terminal domain. The short motif at 22 to 26 (LYCRE) is the LXCXE motif; interaction with host RB1 and TMEM173/STING element. A zinc finger spans residues 53 to 91 (CGGVCCKTVRLCVYSTHTGIRVLQELLHQDALQIVCPTC). The Nuclear export signal signature appears at 72–80 (IRVLQELLH).

It belongs to the papillomaviridae E7 protein family. In terms of assembly, homodimer. Homooligomer. Interacts with host RB1; this interaction induces dissociation of RB1-E2F1 complex thereby disrupting RB1 activity. Interacts with host EP300; this interaction represses EP300 transcriptional activity. Interacts with protein E2; this interaction inhibits E7 oncogenic activity. Interacts with host TMEM173/STING; this interaction impairs the ability of TMEM173/STING to sense cytosolic DNA and promote the production of type I interferon (IFN-alpha and IFN-beta). Highly phosphorylated.

It is found in the host cytoplasm. It localises to the host nucleus. Its function is as follows. Plays a role in viral genome replication by driving entry of quiescent cells into the cell cycle. Stimulation of progression from G1 to S phase allows the virus to efficiently use the cellular DNA replicating machinery to achieve viral genome replication. E7 protein has both transforming and trans-activating activities. Induces the disassembly of the E2F1 transcription factor from RB1, with subsequent transcriptional activation of E2F1-regulated S-phase genes. Interferes with host histone deacetylation mediated by HDAC1 and HDAC2, leading to transcription activation. Also plays a role in the inhibition of both antiviral and antiproliferative functions of host interferon alpha. Interaction with host TMEM173/STING impairs the ability of TMEM173/STING to sense cytosolic DNA and promote the production of type I interferon (IFN-alpha and IFN-beta). This chain is Protein E7, found in Human papillomavirus type 54.